The chain runs to 377 residues: Acetyltransferase ple2 (377 aa).

The N-terminal stretch at 1–27 (MKPFSPELLVLSFILLVLSCAIRPAKG) is a signal peptide. 4 helical membrane-spanning segments follow: residues 29–49 (WILWVIIVALNTYLTMTTTGD), 56–76 (IANNLFVITLTATDYILLTDV), 176–196 (IAAWLLFTTNQVSILLTALSL), and 258–278 (PALYVQLYAAFFLSGVLHAIG).

Belongs to the wax synthase family.

It localises to the membrane. It participates in secondary metabolite biosynthesis; terpenoid biosynthesis. Its function is as follows. Acetyltransferase; part of the gene cluster that mediates the biosynthesis of pleuromutilin, a tricyclic diterpene showing antibacterial properties. The geranylgeranyl diphosphate (GGPP) synthase ple4 catalyzes the first step in pleuromutilin biosynthesis. GGPP is then substrate of the premutilin synthase (PS) ple3 to yield premutilin. Premutilin synthase is a bifunctional enzyme composed of the fusion of a class II diterpene cyclase (DTC) and a class I diterpene synthase (DTS), with the corresponding domains and active sites containing characteristic aspartate-rich motifs. GGPP is first converted to mutildienyl-diphosphate (MPP) at the class II DTC site. MPP is subsequently further cyclized at the class I DTS site, followed by a 1,5-hydride shift and addition of water prior to terminating deprotonation, to yield premutilin. The cytochrome P450 monooxygenases ple5 and ple6 hydroxylate premutilin at C-11 and C-3, respectively, producing 11-hydroxypremutilin and 3-hydroxypremutilin. The combination of the actions of both ple5 and ple6 leads to the production of 3,11-dihydroxypremutilin. The short chain dehydrogenase ple7 further converts 3,11-dihydroxypremutilin into mutilin. The acetyltransferase ple2 then acetylates mutilin to produce 14-O-acetylmutilin. Finally, the cytochrome P450 monooxygenase ple1 catalyzes hydroxylation on the alpha position of the acetyl side chain of 14-O-acetylmutilin to yield pleuromutilin. This chain is Acetyltransferase ple2, found in Rhodocybe pseudopiperita (Clitopilus pseudopiperitus).